The sequence spans 116 residues: Large ribosomal subunit protein uL18 (116 aa).

The protein belongs to the universal ribosomal protein uL18 family. Part of the 50S ribosomal subunit; part of the 5S rRNA/L5/L18/L25 subcomplex. Contacts the 5S and 23S rRNAs.

Functionally, this is one of the proteins that bind and probably mediate the attachment of the 5S RNA into the large ribosomal subunit, where it forms part of the central protuberance. This is Large ribosomal subunit protein uL18 from Exiguobacterium sibiricum (strain DSM 17290 / CCUG 55495 / CIP 109462 / JCM 13490 / 255-15).